Reading from the N-terminus, the 309-residue chain is MEIQFLGTGAGQPAKARNVSSLVLKLLDELNEIWMFDCGEGTQRQILETTIKPRKIRKIFITHLHGDHVFGLPGFLSSRAFQANDEQTDVDIYGPVGIKHLVMASIRTSGAHLPYHIHFHEFDAKHLGKILETDKFMVYAEKLDHTIFCVGYRVVQKDLEGTLDAEKLKAAGLPFGPLFGRVKNGQDVVLEDGTTIIAKDYISAPKKGKVITILGDTRKTDASIRLALGADVLVHESTYSKGDENLARRHGHSTNTEAARVAKAASVKKLLLNHISARFLSHDISRMRDDAQEIFTDVHIVRDLEEVKL.

Positions 63, 65, 67, 68, 145, 216, and 274 each coordinate Zn(2+). Asp67 functions as the Proton acceptor in the catalytic mechanism.

It belongs to the RNase Z family. As to quaternary structure, homodimer. The cofactor is Zn(2+).

The catalysed reaction is Endonucleolytic cleavage of RNA, removing extra 3' nucleotides from tRNA precursor, generating 3' termini of tRNAs. A 3'-hydroxy group is left at the tRNA terminus and a 5'-phosphoryl group is left at the trailer molecule.. In terms of biological role, zinc phosphodiesterase, which displays some tRNA 3'-processing endonuclease activity. Probably involved in tRNA maturation, by removing a 3'-trailer from precursor tRNA. This is Ribonuclease Z from Streptococcus mutans serotype c (strain ATCC 700610 / UA159).